Here is a 130-residue protein sequence, read N- to C-terminus: Small ribosomal subunit protein uS9 (130 aa).

A disordered region spans residues 107 to 130 (DSREVERKKVGLRKARRRPQFSKR). The segment covering 116–130 (VGLRKARRRPQFSKR) has biased composition (basic residues).

This sequence belongs to the universal ribosomal protein uS9 family.

This chain is Small ribosomal subunit protein uS9, found in Marinomonas sp. (strain MWYL1).